The primary structure comprises 352 residues: Spermidine/putrescine import ATP-binding protein PotA (352 aa).

The region spanning 7–237 is the ABC transporter domain; the sequence is IELKNVSKKY…PKNKFVANFI (231 aa). Residue 39–46 participates in ATP binding; the sequence is GPSGCGKT.

This sequence belongs to the ABC transporter superfamily. Spermidine/putrescine importer (TC 3.A.1.11.1) family. The complex is composed of two ATP-binding proteins (PotA), two transmembrane proteins (PotB and PotC) and a solute-binding protein (PotD).

The protein localises to the cell membrane. It carries out the reaction ATP + H2O + polyamine-[polyamine-binding protein]Side 1 = ADP + phosphate + polyamineSide 2 + [polyamine-binding protein]Side 1.. Functionally, part of the ABC transporter complex PotABCD involved in spermidine/putrescine import. Responsible for energy coupling to the transport system. This is Spermidine/putrescine import ATP-binding protein PotA from Clostridium acetobutylicum (strain ATCC 824 / DSM 792 / JCM 1419 / IAM 19013 / LMG 5710 / NBRC 13948 / NRRL B-527 / VKM B-1787 / 2291 / W).